The chain runs to 290 residues: 4-hydroxy-3-methylbut-2-enyl diphosphate reductase (290 aa).

Cys12 lines the [4Fe-4S] cluster pocket. Residues His50 and His83 each coordinate (2E)-4-hydroxy-3-methylbut-2-enyl diphosphate. Residues His50 and His83 each contribute to the dimethylallyl diphosphate site. Residues His50 and His83 each contribute to the isopentenyl diphosphate site. Residue Cys105 coordinates [4Fe-4S] cluster. His133 contacts (2E)-4-hydroxy-3-methylbut-2-enyl diphosphate. His133 serves as a coordination point for dimethylallyl diphosphate. His133 serves as a coordination point for isopentenyl diphosphate. Glu135 acts as the Proton donor in catalysis. Thr173 contributes to the (2E)-4-hydroxy-3-methylbut-2-enyl diphosphate binding site. Cys202 contacts [4Fe-4S] cluster. (2E)-4-hydroxy-3-methylbut-2-enyl diphosphate is bound by residues Ser230, Asn232, and Ser274. The dimethylallyl diphosphate site is built by Ser230, Asn232, and Ser274. 3 residues coordinate isopentenyl diphosphate: Ser230, Asn232, and Ser274.

This sequence belongs to the IspH family. It depends on [4Fe-4S] cluster as a cofactor.

The catalysed reaction is isopentenyl diphosphate + 2 oxidized [2Fe-2S]-[ferredoxin] + H2O = (2E)-4-hydroxy-3-methylbut-2-enyl diphosphate + 2 reduced [2Fe-2S]-[ferredoxin] + 2 H(+). It carries out the reaction dimethylallyl diphosphate + 2 oxidized [2Fe-2S]-[ferredoxin] + H2O = (2E)-4-hydroxy-3-methylbut-2-enyl diphosphate + 2 reduced [2Fe-2S]-[ferredoxin] + 2 H(+). Its pathway is isoprenoid biosynthesis; dimethylallyl diphosphate biosynthesis; dimethylallyl diphosphate from (2E)-4-hydroxy-3-methylbutenyl diphosphate: step 1/1. It functions in the pathway isoprenoid biosynthesis; isopentenyl diphosphate biosynthesis via DXP pathway; isopentenyl diphosphate from 1-deoxy-D-xylulose 5-phosphate: step 6/6. Functionally, catalyzes the conversion of 1-hydroxy-2-methyl-2-(E)-butenyl 4-diphosphate (HMBPP) into a mixture of isopentenyl diphosphate (IPP) and dimethylallyl diphosphate (DMAPP). Acts in the terminal step of the DOXP/MEP pathway for isoprenoid precursor biosynthesis. This is 4-hydroxy-3-methylbut-2-enyl diphosphate reductase from Nitratidesulfovibrio vulgaris (strain ATCC 29579 / DSM 644 / CCUG 34227 / NCIMB 8303 / VKM B-1760 / Hildenborough) (Desulfovibrio vulgaris).